Here is a 460-residue protein sequence, read N- to C-terminus: Bifunctional protein GlmU (460 aa).

Positions 1–235 are pyrophosphorylase; that stretch reads MALSAAIVLA…PLTVEGVNDR (235 aa). UDP-N-acetyl-alpha-D-glucosamine-binding positions include 9 to 12, Lys23, Gln76, and 81 to 82; these read LAAG and GT. Asp109 serves as a coordination point for Mg(2+). Residues Gly146, Glu161, Asn176, and Asn233 each coordinate UDP-N-acetyl-alpha-D-glucosamine. Asn233 is a Mg(2+) binding site. Residues 236-256 form a linker region; that stretch reads VQLAALSKTYNRRVCERWMRD. Residues 257 to 460 are N-acetyltransferase; sequence GVTILDPETT…VEGWKPAWER (204 aa). Residues Arg338 and Lys356 each contribute to the UDP-N-acetyl-alpha-D-glucosamine site. Residue His368 is the Proton acceptor of the active site. The UDP-N-acetyl-alpha-D-glucosamine site is built by Tyr371 and Asn382. Residues 391-392 and Ala428 each bind acetyl-CoA; that span reads NY.

It in the N-terminal section; belongs to the N-acetylglucosamine-1-phosphate uridyltransferase family. The protein in the C-terminal section; belongs to the transferase hexapeptide repeat family. Homotrimer. The cofactor is Mg(2+).

It is found in the cytoplasm. The enzyme catalyses alpha-D-glucosamine 1-phosphate + acetyl-CoA = N-acetyl-alpha-D-glucosamine 1-phosphate + CoA + H(+). The catalysed reaction is N-acetyl-alpha-D-glucosamine 1-phosphate + UTP + H(+) = UDP-N-acetyl-alpha-D-glucosamine + diphosphate. It functions in the pathway nucleotide-sugar biosynthesis; UDP-N-acetyl-alpha-D-glucosamine biosynthesis; N-acetyl-alpha-D-glucosamine 1-phosphate from alpha-D-glucosamine 6-phosphate (route II): step 2/2. The protein operates within nucleotide-sugar biosynthesis; UDP-N-acetyl-alpha-D-glucosamine biosynthesis; UDP-N-acetyl-alpha-D-glucosamine from N-acetyl-alpha-D-glucosamine 1-phosphate: step 1/1. It participates in bacterial outer membrane biogenesis; LPS lipid A biosynthesis. Its function is as follows. Catalyzes the last two sequential reactions in the de novo biosynthetic pathway for UDP-N-acetylglucosamine (UDP-GlcNAc). The C-terminal domain catalyzes the transfer of acetyl group from acetyl coenzyme A to glucosamine-1-phosphate (GlcN-1-P) to produce N-acetylglucosamine-1-phosphate (GlcNAc-1-P), which is converted into UDP-GlcNAc by the transfer of uridine 5-monophosphate (from uridine 5-triphosphate), a reaction catalyzed by the N-terminal domain. The sequence is that of Bifunctional protein GlmU from Bifidobacterium longum (strain NCC 2705).